The primary structure comprises 343 residues: Fructose-1,6-bisphosphatase class 1 (343 aa).

Mg(2+)-binding residues include E99, D121, L123, and D124. Substrate is bound by residues 124–127 (DGSS), N218, Y250, and K283. Residue E289 coordinates Mg(2+).

This sequence belongs to the FBPase class 1 family. Homotetramer. It depends on Mg(2+) as a cofactor.

It localises to the cytoplasm. The catalysed reaction is beta-D-fructose 1,6-bisphosphate + H2O = beta-D-fructose 6-phosphate + phosphate. Its pathway is carbohydrate biosynthesis; gluconeogenesis. This is Fructose-1,6-bisphosphatase class 1 from Leptospira biflexa serovar Patoc (strain Patoc 1 / Ames).